Consider the following 1465-residue polypeptide: Myomesin-2 (1465 aa).

Residues 38–61 (ASTQASSQKSLSQRSSSQRASSQT) are disordered. The segment covering 41-61 (QASSQKSLSQRSSSQRASSQT) has biased composition (low complexity). Ig-like C2-type domains follow at residues 154–245 (PEIL…AAVV) and 266–371 (PLSS…AFLF). 5 Fibronectin type-III domains span residues 385–480 (APMD…ALDP), 513–608 (PPTG…AQDV), 614–707 (APGR…VQAA), 710–812 (VPSH…TMPE), and 815–912 (PAYD…ARPG). Ig-like C2-type domains lie at 904–1002 (PVLV…EELE), 1130–1211 (PHFA…QDVS), and 1345–1434 (RLIG…VTVS). The tract at residues 1442 to 1465 (IPDMAPPQQAKPKLIPASASAAGQ) is disordered.

In terms of assembly, interacts with TTN/titin.

It localises to the cytoplasm. The protein localises to the myofibril. Its subcellular location is the sarcomere. It is found in the m line. Functionally, major component of the vertebrate myofibrillar M band. Binds myosin, titin, and light meromyosin. This binding is dose dependent. The polypeptide is Myomesin-2 (MYOM2) (Homo sapiens (Human)).